The sequence spans 962 residues: Translation initiation factor IF-2 (962 aa).

Basic and acidic residues predominate over residues 52–77 (RSHGQADDSSRKKITLTKRETSEIRQ). 2 disordered regions span residues 52 to 87 (RSHG…TRTV) and 121 to 378 (AVEE…EPVV). Over residues 78–87 (SDGTGKTRTV) the composition is skewed to polar residues. Composition is skewed to basic and acidic residues over residues 123–183 (EEAR…KAEE), 197–250 (DSSR…EAEA), and 267–278 (PSERKAEEKKAE). The span at 342–355 (TSGGVGGWRGGPRG) shows a compositional bias: gly residues. Positions 462–631 (PRPPVVTVMG…LLQAEVLELT (170 aa)) constitute a tr-type G domain. The G1 stretch occupies residues 471-478 (GHVDHGKT). A GTP-binding site is contributed by 471 to 478 (GHVDHGKT). The tract at residues 496 to 500 (GITQH) is G2. Positions 517–520 (DTPG) are G3. GTP-binding positions include 517-521 (DTPGH) and 571-574 (NKID). Residues 571 to 574 (NKID) are G4. Positions 607–609 (SAK) are G5.

Belongs to the TRAFAC class translation factor GTPase superfamily. Classic translation factor GTPase family. IF-2 subfamily.

The protein localises to the cytoplasm. Functionally, one of the essential components for the initiation of protein synthesis. Protects formylmethionyl-tRNA from spontaneous hydrolysis and promotes its binding to the 30S ribosomal subunits. Also involved in the hydrolysis of GTP during the formation of the 70S ribosomal complex. In Cupriavidus necator (strain ATCC 17699 / DSM 428 / KCTC 22496 / NCIMB 10442 / H16 / Stanier 337) (Ralstonia eutropha), this protein is Translation initiation factor IF-2.